We begin with the raw amino-acid sequence, 210 residues long: UPF0502 protein Sama_1967 (210 aa).

The protein belongs to the UPF0502 family.

The protein is UPF0502 protein Sama_1967 of Shewanella amazonensis (strain ATCC BAA-1098 / SB2B).